Here is a 418-residue protein sequence, read N- to C-terminus: Glutamyl-tRNA reductase (418 aa).

Substrate-binding positions include 49-52 (TCNR), S109, 114-116 (EPQ), and Q120. C50 functions as the Nucleophile in the catalytic mechanism. 189-194 (GAGETI) contacts NADP(+).

This sequence belongs to the glutamyl-tRNA reductase family. As to quaternary structure, homodimer.

It catalyses the reaction (S)-4-amino-5-oxopentanoate + tRNA(Glu) + NADP(+) = L-glutamyl-tRNA(Glu) + NADPH + H(+). It participates in porphyrin-containing compound metabolism; protoporphyrin-IX biosynthesis; 5-aminolevulinate from L-glutamyl-tRNA(Glu): step 1/2. Functionally, catalyzes the NADPH-dependent reduction of glutamyl-tRNA(Glu) to glutamate 1-semialdehyde (GSA). The sequence is that of Glutamyl-tRNA reductase from Escherichia fergusonii (strain ATCC 35469 / DSM 13698 / CCUG 18766 / IAM 14443 / JCM 21226 / LMG 7866 / NBRC 102419 / NCTC 12128 / CDC 0568-73).